The primary structure comprises 335 residues: Methyltransferase pgmE (335 aa).

This sequence belongs to the methyltransferase superfamily.

It functions in the pathway pigment biosynthesis. It participates in secondary metabolite biosynthesis. Its function is as follows. Methyltransferase; part of the gene cluster that mediates the biosynthesis of pleosporalin A, ascomycone A, as well as a third cryptic naphthoquinone derived pigment, all responsible for the coloration of conidia. Essential for the production of pleosporalin A, but not the 2 other final products. The pathway begins with the biosynthesis of the cyclized heptaketide 3-acetonyl-1,6,8-trihydroxy-2-naphthaldehyde by the NR-PKS pgmA. The C-6 hydroxyl group is further methylated by the O-methyltransferase pgmB to yield fusarubinaldehyde which is in turn oxidized by the cytochrome P450 monooxygenase pgmC at C-9. The C-1 hydroxyl group is then methylated spontaneously. Although pgmE, pgmD and pgmH are essential for the production of pleosporalin A, it is not the case for the 2 other final products and it remains difficult to assign a specific function to each enzyme. PgmF and pgmG seem not to be involved in pigment biosynthesis although they were regulated by the cluster-specific transcription factor pgmR. The protein is Methyltransferase pgmE of Aspergillus terreus (strain NIH 2624 / FGSC A1156).